Reading from the N-terminus, the 246-residue chain is Orotidine 5'-phosphate decarboxylase (246 aa).

Substrate is bound by residues Asp22, Lys44, 71–80 (DLKFHDIPNT), Thr131, Arg192, Gln201, Gly221, and Arg222. The active-site Proton donor is Lys73.

This sequence belongs to the OMP decarboxylase family. Type 1 subfamily. In terms of assembly, homodimer.

The enzyme catalyses orotidine 5'-phosphate + H(+) = UMP + CO2. It participates in pyrimidine metabolism; UMP biosynthesis via de novo pathway; UMP from orotate: step 2/2. Functionally, catalyzes the decarboxylation of orotidine 5'-monophosphate (OMP) to uridine 5'-monophosphate (UMP). This chain is Orotidine 5'-phosphate decarboxylase, found in Enterobacter sp. (strain 638).